A 119-amino-acid polypeptide reads, in one-letter code: MKKTYRVKREKDFQAIFKDGKSTANRKFVIYHLNRGQDHFRVGISVGKKIGNAVTRNAVKRKIRHVIMALGHQLKSEDFVVIARKGVESLEYQELQQNLHHVLKLAQLLEKGFESEEKH.

The protein belongs to the RnpA family. As to quaternary structure, consists of a catalytic RNA component (M1 or rnpB) and a protein subunit.

It catalyses the reaction Endonucleolytic cleavage of RNA, removing 5'-extranucleotides from tRNA precursor.. In terms of biological role, RNaseP catalyzes the removal of the 5'-leader sequence from pre-tRNA to produce the mature 5'-terminus. It can also cleave other RNA substrates such as 4.5S RNA. The protein component plays an auxiliary but essential role in vivo by binding to the 5'-leader sequence and broadening the substrate specificity of the ribozyme. This Streptococcus pyogenes serotype M1 protein is Ribonuclease P protein component.